We begin with the raw amino-acid sequence, 120 residues long: NAD(P)H-quinone oxidoreductase subunit 3, chloroplastic (120 aa).

The next 3 helical transmembrane spans lie at isoleucine 9–glycine 29, methionine 64–methionine 84, and valine 88–serine 108.

The protein belongs to the complex I subunit 3 family. In terms of assembly, NDH is composed of at least 16 different subunits, 5 of which are encoded in the nucleus.

Its subcellular location is the plastid. The protein resides in the chloroplast thylakoid membrane. The catalysed reaction is a plastoquinone + NADH + (n+1) H(+)(in) = a plastoquinol + NAD(+) + n H(+)(out). The enzyme catalyses a plastoquinone + NADPH + (n+1) H(+)(in) = a plastoquinol + NADP(+) + n H(+)(out). Functionally, NDH shuttles electrons from NAD(P)H:plastoquinone, via FMN and iron-sulfur (Fe-S) centers, to quinones in the photosynthetic chain and possibly in a chloroplast respiratory chain. The immediate electron acceptor for the enzyme in this species is believed to be plastoquinone. Couples the redox reaction to proton translocation, and thus conserves the redox energy in a proton gradient. The protein is NAD(P)H-quinone oxidoreductase subunit 3, chloroplastic of Phaseolus vulgaris (Kidney bean).